Reading from the N-terminus, the 927-residue chain is Valine--tRNA ligase (927 aa).

The short motif at 45–55 is the 'HIGH' region element; that stretch reads PNVTGSLHMGH. Positions 571–575 match the 'KMSKS' region motif; sequence KMSKS. Lys-574 contacts ATP. Residues 856 to 917 are a coiled coil; that stretch reads SLIDLAAEAA…EYRDAQDKLA (62 aa).

Belongs to the class-I aminoacyl-tRNA synthetase family. ValS type 1 subfamily. As to quaternary structure, monomer.

The protein resides in the cytoplasm. It carries out the reaction tRNA(Val) + L-valine + ATP = L-valyl-tRNA(Val) + AMP + diphosphate. Its function is as follows. Catalyzes the attachment of valine to tRNA(Val). As ValRS can inadvertently accommodate and process structurally similar amino acids such as threonine, to avoid such errors, it has a 'posttransfer' editing activity that hydrolyzes mischarged Thr-tRNA(Val) in a tRNA-dependent manner. This chain is Valine--tRNA ligase, found in Mesorhizobium japonicum (strain LMG 29417 / CECT 9101 / MAFF 303099) (Mesorhizobium loti (strain MAFF 303099)).